A 206-amino-acid polypeptide reads, in one-letter code: Large ribosomal subunit protein uL4 (206 aa).

Belongs to the universal ribosomal protein uL4 family. Part of the 50S ribosomal subunit.

In terms of biological role, one of the primary rRNA binding proteins, this protein initially binds near the 5'-end of the 23S rRNA. It is important during the early stages of 50S assembly. It makes multiple contacts with different domains of the 23S rRNA in the assembled 50S subunit and ribosome. Forms part of the polypeptide exit tunnel. In Cereibacter sphaeroides (strain ATCC 17025 / ATH 2.4.3) (Rhodobacter sphaeroides), this protein is Large ribosomal subunit protein uL4.